The sequence spans 538 residues: Tryptophan 7-halogenase PrnA (538 aa).

Positions 13, 15, 16, 39, 42, 45, 49, and 50 each coordinate FAD. Lys79 is an active-site residue. 7-chloro-L-tryptophan is bound at residue Lys79. Val187 and Leu337 together coordinate FAD. Glu346 provides a ligand contact to 7-chloro-L-tryptophan. Glu346 contributes to the L-tryptophan binding site. Positions 348 and 349 each coordinate chloride. Ile350 lines the FAD pocket. 7-chloro-L-tryptophan contacts are provided by Tyr443, Tyr444, Glu450, and Phe454. Positions 443, 444, 450, and 454 each coordinate L-tryptophan.

Belongs to the flavin-dependent halogenase family. Bacterial tryptophan halogenase subfamily. As to quaternary structure, homodimer.

It catalyses the reaction L-tryptophan + FADH2 + chloride + O2 = 7-chloro-L-tryptophan + FAD + 2 H2O. The protein operates within antibiotic biosynthesis. In terms of biological role, involved in the biosynthesis of the antifungal antibiotic pyrrolnitrin. Catalyzes the chlorination of tryptophan (Trp) at C7 position to yield 7-chloro-L-tryptophan (7-CLT). The polypeptide is Tryptophan 7-halogenase PrnA (Pseudomonas fluorescens).